A 134-amino-acid polypeptide reads, in one-letter code: Peptide methionine sulfoxide reductase MsrB (134 aa).

The region spanning 9–131 (DEYWRDKLDA…NSASIQLQKE (123 aa)) is the MsrB domain. 4 residues coordinate Zn(2+): cysteine 48, cysteine 51, cysteine 97, and cysteine 100. Residue cysteine 120 is the Nucleophile of the active site.

It belongs to the MsrB Met sulfoxide reductase family. The cofactor is Zn(2+).

It carries out the reaction L-methionyl-[protein] + [thioredoxin]-disulfide + H2O = L-methionyl-(R)-S-oxide-[protein] + [thioredoxin]-dithiol. The chain is Peptide methionine sulfoxide reductase MsrB from Saccharophagus degradans (strain 2-40 / ATCC 43961 / DSM 17024).